The primary structure comprises 236 residues: MTKVCAVFGGSRGIGKAVSKLLAQRDYKVAVISRDLEVAKAAAAEVGAHLALSCDVSKENEIQDTFKEITNNLGNVDYLVNSAGIRRDALLLRTRSEDIRSLLSVNLVGTIQTCKLALRSMIQQQGGAIVNIGSIVGHKGNIGQSIYGASKEGLIGFSKSLAKEVAKRNIRVNVVAPGFIHTDMTLGLEEDSLTKMVPLGRFGDPEEVAQSVLFLLESPYITGHVLVVDGGLQLQM.

NADP(+) contacts are provided by residues 11–14 (SRGI), 34–35 (RD), Asp-55, and 82–84 (SAG). Ser-134 contributes to the substrate binding site. Residues Tyr-147, Lys-151, and 180 to 182 (IHT) contribute to the NADP(+) site. Tyr-147 acts as the Proton acceptor in catalysis.

Belongs to the short-chain dehydrogenases/reductases (SDR) family. In terms of assembly, homotetramer (in vitro). Heterotetramer with HSD17B8; contains two molecules each of HSD17B8 and CBR4.

It is found in the mitochondrion matrix. It participates in lipid metabolism; fatty acid biosynthesis. In terms of biological role, the heterotetramer with HSD17B8 has NADH-dependent 3-ketoacyl-acyl carrier protein reductase activity, and thereby plays a role in mitochondrial fatty acid biosynthesis. Within the heterotetramer, HSD17B8 binds NADH; CBR4 binds NADPD. The homotetramer has NADPH-dependent quinone reductase activity. Both homotetramer and the heterotetramer have broad in vitro substrate specificity and can reduce 9,10-phenanthrenequinone, 1,4-benzoquinone and various other o-quinones and p-quinones. This Xenopus tropicalis (Western clawed frog) protein is Carbonyl reductase family member 4 (cbr4).